The following is a 441-amino-acid chain: Ribulose bisphosphate carboxylase large chain (441 aa).

Lys-5 is subject to N6,N6,N6-trimethyllysine. Positions 114 and 164 each coordinate substrate. Lys-166 acts as the Proton acceptor in catalysis. Lys-168 lines the substrate pocket. Positions 192, 194, and 195 each coordinate Mg(2+). Lys-192 is subject to N6-carboxylysine. His-285 functions as the Proton acceptor in the catalytic mechanism. 3 residues coordinate substrate: Arg-286, His-318, and Ser-370.

This sequence belongs to the RuBisCO large chain family. Type I subfamily. In terms of assembly, heterohexadecamer of 8 large chains and 8 small chains; disulfide-linked. The disulfide link is formed within the large subunit homodimers. Mg(2+) is required as a cofactor. The disulfide bond which can form in the large chain dimeric partners within the hexadecamer appears to be associated with oxidative stress and protein turnover.

It is found in the plastid. The protein resides in the chloroplast. It carries out the reaction 2 (2R)-3-phosphoglycerate + 2 H(+) = D-ribulose 1,5-bisphosphate + CO2 + H2O. The catalysed reaction is D-ribulose 1,5-bisphosphate + O2 = 2-phosphoglycolate + (2R)-3-phosphoglycerate + 2 H(+). RuBisCO catalyzes two reactions: the carboxylation of D-ribulose 1,5-bisphosphate, the primary event in carbon dioxide fixation, as well as the oxidative fragmentation of the pentose substrate in the photorespiration process. Both reactions occur simultaneously and in competition at the same active site. This is Ribulose bisphosphate carboxylase large chain from Pellaea andromedifolia (Coffee fern).